Consider the following 653-residue polypeptide: N-acetylglucosaminyl-phosphatidylinositol biosynthetic protein gpi1 (653 aa).

8 helical membrane-spanning segments follow: residues 43–63, 237–257, 327–347, 382–402, 407–427, 485–505, 520–540, and 605–625; these read LIVV…VDYC, SLFA…LLAI, IFGI…VKLI, FIMK…LHCL, FLVQ…IALI, LLLG…IYVF, LAIC…VTML, and LISL…LYNI.

It localises to the membrane. The protein operates within glycolipid biosynthesis; glycosylphosphatidylinositol-anchor biosynthesis. Its function is as follows. Necessary for the synthesis of N-acetylglucosaminyl-phosphatidylinositol, the very early intermediate in GPI-anchor biosynthesis. The sequence is that of N-acetylglucosaminyl-phosphatidylinositol biosynthetic protein gpi1 (gpi1) from Schizosaccharomyces pombe (strain 972 / ATCC 24843) (Fission yeast).